The following is a 350-amino-acid chain: Serpentine receptor class beta-12 (350 aa).

Topologically, residues 1–21 (MSEANLTECELAYQLTYHPFY) are extracellular. N-linked (GlcNAc...) asparagine glycosylation is present at N5. The helical transmembrane segment at 22 to 42 (MIAQFWSFFVSLLAMPSLIFF) threads the bilayer. Residues 43 to 57 (MVEKVFKLPFHGNLK) are Cytoplasmic-facing. The chain crosses the membrane as a helical span at residues 58–78 (FLLVSYFIGTFLFASIICFTF). Topologically, residues 79–103 (GYHFFVPFFVTSNCDLIINATLFKY) are extracellular. N97 is a glycosylation site (N-linked (GlcNAc...) asparagine). A helical transmembrane segment spans residues 104-124 (GHMIALIFMTIPMILPTAFTV). Topologically, residues 125 to 141 (ERFVALKMAHSYEHVRT) are cytoplasmic. Residues 142–162 (LLGPVLVLVVIAIDSMFLYDI) form a helical membrane-spanning segment. Topologically, residues 163 to 189 (YGQEKFDKPFINFILVPATSALQFNSF) are extracellular. A helical membrane pass occupies residues 190–210 (LWYMLYLKITNFICNLILLFI). The Cytoplasmic segment spans residues 211 to 243 (HKILHQSSRYRRKNVSLSVKYEMQEISQSSRFT). Residues 244 to 264 (LIVTFTHLLFFGWYVSTILLI) form a helical membrane-spanning segment. Topologically, residues 265-282 (RTVGPDFFRGFINYTVMR) are extracellular. N-linked (GlcNAc...) asparagine glycosylation occurs at N277. A helical membrane pass occupies residues 283–303 (GVYCATPTYNLVIVFIGFKAL). Residues 304-350 (NHLNFKRNNKVQSTIQIKSTGQEGAENYDNAISNYWDSVYTMNKSKL) lie on the Cytoplasmic side of the membrane.

It belongs to the nematode receptor-like protein srb family. In terms of tissue distribution, expressed throughout the head.

The protein localises to the cell membrane. Its subcellular location is the perikaryon. The protein resides in the cell projection. It is found in the dendrite. Its function is as follows. G-protein coupled receptor. Plays a role in the navigational capacity of sperm and promotes the targeting of sperm derived from males to the fertilization site in the uterus of hermaphrodites. This chain is Serpentine receptor class beta-12, found in Caenorhabditis elegans.